We begin with the raw amino-acid sequence, 146 residues long: Large ribosomal subunit protein uL15 (146 aa).

Positions 1–46 (MLHQIKPFKGARKTVKRLGRGCGSGTGKTSGKGHKGQLARSGGGVR) are disordered. Over residues 9–19 (KGARKTVKRLG) the composition is skewed to basic residues. Gly residues predominate over residues 20–30 (RGCGSGTGKTS).

This sequence belongs to the universal ribosomal protein uL15 family. As to quaternary structure, part of the 50S ribosomal subunit.

In terms of biological role, binds to the 23S rRNA. In Phytoplasma mali (strain AT), this protein is Large ribosomal subunit protein uL15.